The sequence spans 509 residues: Ribonuclease Y (509 aa).

The chain crosses the membrane as a helical span at residues 3-23 (IIFSSIFAGFILGFLIRVFLG). One can recognise a KH domain in the interval 197-257 (TVASVELPND…IRKELAKRTL (61 aa)). The HD domain occupies 323–418 (VLSHSKETAI…VQIADAISAS (96 aa)).

It belongs to the RNase Y family.

Its subcellular location is the cell membrane. Functionally, endoribonuclease that initiates mRNA decay. The polypeptide is Ribonuclease Y (Borreliella afzelii (strain PKo) (Borrelia afzelii)).